The chain runs to 603 residues: DNA mismatch repair protein MutL (603 aa).

The protein belongs to the DNA mismatch repair MutL/HexB family.

Functionally, this protein is involved in the repair of mismatches in DNA. It is required for dam-dependent methyl-directed DNA mismatch repair. May act as a 'molecular matchmaker', a protein that promotes the formation of a stable complex between two or more DNA-binding proteins in an ATP-dependent manner without itself being part of a final effector complex. The sequence is that of DNA mismatch repair protein MutL from Bradyrhizobium diazoefficiens (strain JCM 10833 / BCRC 13528 / IAM 13628 / NBRC 14792 / USDA 110).